The following is a 142-amino-acid chain: Putative pre-16S rRNA nuclease (142 aa).

The protein belongs to the YqgF nuclease family.

Its subcellular location is the cytoplasm. Functionally, could be a nuclease involved in processing of the 5'-end of pre-16S rRNA. In Staphylococcus carnosus (strain TM300), this protein is Putative pre-16S rRNA nuclease.